Reading from the N-terminus, the 78-residue chain is Acyl carrier protein (78 aa).

The region spanning 2 to 77 (SEIAQKVKSI…QAIAYLEQHV (76 aa)) is the Carrier domain. O-(pantetheine 4'-phosphoryl)serine is present on S37.

Belongs to the acyl carrier protein (ACP) family. Post-translationally, 4'-phosphopantetheine is transferred from CoA to a specific serine of apo-ACP by AcpS. This modification is essential for activity because fatty acids are bound in thioester linkage to the sulfhydryl of the prosthetic group.

Its subcellular location is the cytoplasm. The protein operates within lipid metabolism; fatty acid biosynthesis. Its function is as follows. Carrier of the growing fatty acid chain in fatty acid biosynthesis. The polypeptide is Acyl carrier protein (Cytophaga hutchinsonii (strain ATCC 33406 / DSM 1761 / CIP 103989 / NBRC 15051 / NCIMB 9469 / D465)).